Here is a 328-residue protein sequence, read N- to C-terminus: WUSCHEL-related homeobox 6 (328 aa).

A compositionally biased stretch (polar residues) spans 1-11 (MEGSSNSPDRQ). Residues 1 to 45 (MEGSSNSPDRQSSGGSPPEERGGGGSGGGGGRSAAGEPVRSRWTP) form a disordered region. Positions 23 to 33 (GGGSGGGGGRS) are enriched in gly residues. Residues 38–102 (PVRSRWTPKP…NRRSRSRRRQ (65 aa)) constitute a DNA-binding region (homeobox; WUS-type).

The protein belongs to the WUS homeobox family.

It is found in the nucleus. Functionally, transcription factor which may be involved in developmental processes. The sequence is that of WUSCHEL-related homeobox 6 (WOX6) from Oryza sativa subsp. indica (Rice).